The chain runs to 509 residues: tRNA-2-methylthio-N(6)-dimethylallyladenosine synthase (509 aa).

The segment covering 1–15 (MNEQQRLASQQANAS) has biased composition (polar residues). The tract at residues 1–22 (MNEQQRLASQQANASTKKEEKD) is disordered. The 119-residue stretch at 66–184 (RKFYIRTYGC…LPYILKDAMF (119 aa)) folds into the MTTase N-terminal domain. [4Fe-4S] cluster-binding residues include Cys75, Cys111, Cys145, Cys221, Cys225, and Cys228. The region spanning 207 to 437 (RRGDIKAWVN…NELVNEFSAK (231 aa)) is the Radical SAM core domain. The region spanning 440–503 (KKYEGQIVEV…TWSLNGELVE (64 aa)) is the TRAM domain.

Belongs to the methylthiotransferase family. MiaB subfamily. In terms of assembly, monomer. [4Fe-4S] cluster serves as cofactor.

It localises to the cytoplasm. It carries out the reaction N(6)-dimethylallyladenosine(37) in tRNA + (sulfur carrier)-SH + AH2 + 2 S-adenosyl-L-methionine = 2-methylsulfanyl-N(6)-dimethylallyladenosine(37) in tRNA + (sulfur carrier)-H + 5'-deoxyadenosine + L-methionine + A + S-adenosyl-L-homocysteine + 2 H(+). Catalyzes the methylthiolation of N6-(dimethylallyl)adenosine (i(6)A), leading to the formation of 2-methylthio-N6-(dimethylallyl)adenosine (ms(2)i(6)A) at position 37 in tRNAs that read codons beginning with uridine. This is tRNA-2-methylthio-N(6)-dimethylallyladenosine synthase from Bacillus cytotoxicus (strain DSM 22905 / CIP 110041 / 391-98 / NVH 391-98).